A 140-amino-acid polypeptide reads, in one-letter code: Large ribosomal subunit protein uL11 (140 aa).

It belongs to the universal ribosomal protein uL11 family. In terms of assembly, part of the ribosomal stalk of the 50S ribosomal subunit. Interacts with L10 and the large rRNA to form the base of the stalk. L10 forms an elongated spine to which L12 dimers bind in a sequential fashion forming a multimeric L10(L12)X complex. Post-translationally, one or more lysine residues are methylated.

In terms of biological role, forms part of the ribosomal stalk which helps the ribosome interact with GTP-bound translation factors. The polypeptide is Large ribosomal subunit protein uL11 (Syntrophobacter fumaroxidans (strain DSM 10017 / MPOB)).